Consider the following 91-residue polypeptide: Putative regulatory protein CLB_2388 (91 aa).

Belongs to the RemA family.

This Clostridium botulinum (strain ATCC 19397 / Type A) protein is Putative regulatory protein CLB_2388.